We begin with the raw amino-acid sequence, 319 residues long: Carbonic anhydrase, chloroplastic (319 aa).

The transit peptide at 1–98 directs the protein to the chloroplast; it reads MSTINGCLTS…AASKVAQITS (98 aa).

It belongs to the beta-class carbonic anhydrase family. Homohexamer.

The protein localises to the plastid. The protein resides in the chloroplast stroma. It catalyses the reaction hydrogencarbonate + H(+) = CO2 + H2O. In terms of biological role, reversible hydration of carbon dioxide. This chain is Carbonic anhydrase, chloroplastic, found in Spinacia oleracea (Spinach).